Reading from the N-terminus, the 1812-residue chain is Protein virilizer homolog (1812 aa).

An N-acetylalanine modification is found at Ala2. 2 disordered regions span residues 132 to 302 (ISHD…EQIS) and 576 to 596 (KTSS…GLER). Residues Ser133 and Ser138 each carry the phosphoserine modification. Residues 139-152 (PPPPPPPPPPPQPQ) show a composition bias toward pro residues. A compositionally biased stretch (basic and acidic residues) spans 160-169 (KHADGEKEDQ). Position 173 is a phosphoserine (Ser173). A compositionally biased stretch (pro residues) spans 174-190 (PPRPQPRGPRTPPGPPP). Thr184 carries the post-translational modification Phosphothreonine. Residue Ser222 is modified to Phosphoserine. Polar residues predominate over residues 224–233 (DRNSVPQEGQ). 2 stretches are compositionally biased toward acidic residues: residues 234-266 (YSDE…EDED) and 274-302 (IPEE…EQIS). Over residues 584–596 (SEPDHDTDAGLER) the composition is skewed to basic and acidic residues. The residue at position 914 (Tyr914) is a Phosphotyrosine. Ser1579 carries the post-translational modification Phosphoserine. Disordered regions lie at residues 1616-1635 (HVVP…GIRP) and 1663-1812 (KEVV…SFTR). Over residues 1689–1698 (GFSGNRGGRG) the composition is skewed to gly residues. A Phosphothreonine modification is found at Thr1708. Arg1723 is subject to Omega-N-methylarginine. Residues 1723–1748 (RGSSWSAQNTPRGNYNESRGGQSNFN) show a composition bias toward polar residues. Arg1741 is subject to Asymmetric dimethylarginine; alternate. Arg1741 bears the Omega-N-methylarginine; alternate mark. An asymmetric dimethylarginine mark is found at Arg1773, Arg1775, and Arg1793. Gly residues predominate over residues 1788–1802 (GSGGSRGKFVSGGSG). Basic residues predominate over residues 1803 to 1812 (RGRHVRSFTR).

Belongs to the vir family. In terms of assembly, component of the WMM complex, a N6-methyltransferase complex composed of a catalytic subcomplex, named MAC, and of an associated subcomplex, named MACOM. The MAC subcomplex is composed of METTL3 and METTL14. The MACOM subcomplex is composed of WTAP, ZC3H13, CBLL1/HAKAI, VIRMA, and, in some cases of RBM15 (RBM15 or RBM15B). Interacts with WTAP. Also a component of a MACOM-like complex, named WTAP complex, composed of WTAP, ZC3H13, CBLL1, VIRMA, RBM15, BCLAF1 and THRAP3. Interacts with NUDT21 and CPSF6.

It localises to the nucleus speckle. Its subcellular location is the nucleus. The protein localises to the nucleoplasm. The protein resides in the cytoplasm. In terms of biological role, associated component of the WMM complex, a complex that mediates N6-methyladenosine (m6A) methylation of RNAs, a modification that plays a role in the efficiency of mRNA splicing and RNA processing. Acts as a key regulator of m6A methylation by promoting m6A methylation of mRNAs in the 3'-UTR near the stop codon: recruits the catalytic core components METTL3 and METTL14, thereby guiding m6A methylation at specific sites. Required for mRNA polyadenylation via its role in selective m6A methylation: m6A methylation of mRNAs in the 3'-UTR near the stop codon correlating with alternative polyadenylation (APA). The polypeptide is Protein virilizer homolog (Homo sapiens (Human)).